Consider the following 437-residue polypeptide: Adenylosuccinate synthetase (437 aa).

GTP contacts are provided by residues 12–18 (GDEGKGK) and 40–42 (GHT). Asp13 serves as the catalytic Proton acceptor. Mg(2+)-binding residues include Asp13 and Gly40. IMP is bound by residues 13–16 (DEGK), 38–41 (NAGH), Thr128, Arg142, Gln223, Thr238, and Arg302. His41 acts as the Proton donor in catalysis. Residue 298-304 (TTTGRRR) coordinates substrate. GTP-binding positions include Arg304, 330–332 (KLD), and 412–414 (SLG).

The protein belongs to the adenylosuccinate synthetase family. As to quaternary structure, homodimer. Requires Mg(2+) as cofactor.

The protein localises to the cytoplasm. It carries out the reaction IMP + L-aspartate + GTP = N(6)-(1,2-dicarboxyethyl)-AMP + GDP + phosphate + 2 H(+). Its pathway is purine metabolism; AMP biosynthesis via de novo pathway; AMP from IMP: step 1/2. Functionally, plays an important role in the de novo pathway of purine nucleotide biosynthesis. Catalyzes the first committed step in the biosynthesis of AMP from IMP. This is Adenylosuccinate synthetase from Prochlorococcus marinus (strain NATL1A).